The chain runs to 202 residues: Inner membrane-spanning protein YciB (202 aa).

The next 6 helical transmembrane spans lie at 3 to 23, 46 to 66, 73 to 93, 100 to 120, 145 to 165, and 173 to 193; these read ILFD…AGGN, ILLA…WVWM, TMLW…LFFH, WKPT…AVIF, LAWA…AYNF, and FKLF…GFYL.

This sequence belongs to the YciB family.

Its subcellular location is the cell inner membrane. Plays a role in cell envelope biogenesis, maintenance of cell envelope integrity and membrane homeostasis. This is Inner membrane-spanning protein YciB from Aromatoleum aromaticum (strain DSM 19018 / LMG 30748 / EbN1) (Azoarcus sp. (strain EbN1)).